The primary structure comprises 428 residues: MLKSVIENVHALEIFDSRGNPTVEVHVTLSNGVVGKAEVPSGASTGENEAVELRDGGSRLGGKGVSKAVNNVNTEINDALKGMDPYDQAKIDQTMIDLDGTPNKGRLGANAILGVSMATAVAAANDNHQPLYRYLGGIDLEMPQTFHNVINGGEHADNGIDIQEFMITPIAKTSFRDGFEKIVNVYHTLKKVLEDMGYETGLGDEGGFAPNMKNSEEALKALHESIIKAGYKPGEDIGIACDCAASYFYNKEDGKYHLEGKVLNDEELADYYDKLLDEFPELMSMEDPYDENDVDGMVKFTKSHKDRIQIVLDDFICTNPALLKKAIKEGAGNASLIKLNQIGTVTETLETIRMSRKNGYNTMISHRSGETGDTFIADLAVAINGGQLKTGAPARSERVEKYNRLLEIEEELGKGERLAFFPDDIDHD.

(2R)-2-phosphoglycerate is bound at residue Q163. E205 acts as the Proton donor in catalysis. Mg(2+) is bound by residues D242, E286, and D313. Residues K338, R367, S368, and K389 each contribute to the (2R)-2-phosphoglycerate site. K338 functions as the Proton acceptor in the catalytic mechanism.

Belongs to the enolase family. Mg(2+) is required as a cofactor.

The protein resides in the cytoplasm. Its subcellular location is the secreted. The protein localises to the cell surface. It catalyses the reaction (2R)-2-phosphoglycerate = phosphoenolpyruvate + H2O. It functions in the pathway carbohydrate degradation; glycolysis; pyruvate from D-glyceraldehyde 3-phosphate: step 4/5. Catalyzes the reversible conversion of 2-phosphoglycerate (2-PG) into phosphoenolpyruvate (PEP). It is essential for the degradation of carbohydrates via glycolysis. The polypeptide is Enolase (Lactobacillus helveticus (strain DPC 4571)).